A 152-amino-acid chain; its full sequence is MSNGIISKFKNWIVDEEEDYIEDEYESGMDDIVQEEEMNSGFSTAKANKIVNLHTTSQMKVVIVEPKVYDEAATIADHLKQRRAVIVNLEGLTNSEVRKSIFNFMNGAVYVLDGSIQKVSKSIFILAPNNVDIDANMKKELESKAFFPWQNK.

This sequence belongs to the SepF family. In terms of assembly, homodimer. Interacts with FtsZ.

It is found in the cytoplasm. In terms of biological role, cell division protein that is part of the divisome complex and is recruited early to the Z-ring. Probably stimulates Z-ring formation, perhaps through the cross-linking of FtsZ protofilaments. Its function overlaps with FtsA. This is Cell division protein SepF from Clostridioides difficile (strain 630) (Peptoclostridium difficile).